A 307-amino-acid chain; its full sequence is Myeloid-associated differentiation marker homolog (307 aa).

MARVEL domains lie at 15–148 (TLKS…AKPG) and 153–304 (YMAT…RLIF). 8 helical membrane passes run 19 to 39 (PVGI…SLVV), 51 to 71 (LCMF…IVEF), 85 to 105 (FPIT…VIYP), 123 to 143 (IVAI…VSLT), 156 to 176 (TTPG…FVFI), 190 to 210 (WCLA…ILCV), 228 to 248 (YALL…IFSF), and 278 to 298 (MVAV…DLVY).

This sequence belongs to the MAL family.

Its subcellular location is the membrane. This chain is Myeloid-associated differentiation marker homolog (myadm), found in Xenopus laevis (African clawed frog).